The sequence spans 205 residues: Holliday junction branch migration complex subunit RuvA (205 aa).

Residues 1–64 are domain I; the sequence is MIGRLRGVLV…EDAQLLYGFI (64 aa). Residues 65–143 form a domain II region; the sequence is TKQERALFRL…SLLETSAGSE (79 aa). The segment at 144 to 156 is flexible linker; it reads REFMLKSNYTPAP. The domain III stretch occupies residues 157 to 205; the sequence is VVNTAEEDAIAALLSLGYKPAQASKAVSAAFKEGMSSEDLIKSSLKSML.

Belongs to the RuvA family. As to quaternary structure, homotetramer. Forms an RuvA(8)-RuvB(12)-Holliday junction (HJ) complex. HJ DNA is sandwiched between 2 RuvA tetramers; dsDNA enters through RuvA and exits via RuvB. An RuvB hexamer assembles on each DNA strand where it exits the tetramer. Each RuvB hexamer is contacted by two RuvA subunits (via domain III) on 2 adjacent RuvB subunits; this complex drives branch migration. In the full resolvosome a probable DNA-RuvA(4)-RuvB(12)-RuvC(2) complex forms which resolves the HJ.

The protein resides in the cytoplasm. Its function is as follows. The RuvA-RuvB-RuvC complex processes Holliday junction (HJ) DNA during genetic recombination and DNA repair, while the RuvA-RuvB complex plays an important role in the rescue of blocked DNA replication forks via replication fork reversal (RFR). RuvA specifically binds to HJ cruciform DNA, conferring on it an open structure. The RuvB hexamer acts as an ATP-dependent pump, pulling dsDNA into and through the RuvAB complex. HJ branch migration allows RuvC to scan DNA until it finds its consensus sequence, where it cleaves and resolves the cruciform DNA. The polypeptide is Holliday junction branch migration complex subunit RuvA (Shewanella woodyi (strain ATCC 51908 / MS32)).